Reading from the N-terminus, the 1648-residue chain is Vitellogenin-6 (1648 aa).

The signal sequence occupies residues 1–15 (MRFAVLLALFGLALA). The region spanning 26-691 (YRSGREYRYQ…SNDSVLPKEI (666 aa)) is the Vitellogenin domain. 2 disulfides stabilise this stretch: Cys178-Cys203 and Cys219-Cys222. N-linked (GlcNAc...) asparagine glycans are attached at residues Asn237, Asn371, and Asn683. Residues 1070–1092 (EKNVEYEQEDKEPKSSQLQSQIR) are disordered. N-linked (GlcNAc...) asparagine glycosylation occurs at Asn1295. Residues 1346–1514 (PECIVKSKEI…SYLSKDDECE (169 aa)) enclose the VWFD domain. 2 cysteine pairs are disulfide-bonded: Cys1348–Cys1477 and Cys1370–Cys1513. N-linked (GlcNAc...) asparagine glycosylation is found at Asn1584 and Asn1617.

Post-translationally, the precursor protein is probably further processed into vitellin polypeptides VT2 and VT3. In terms of processing, both VT2 and VT3 polypeptides seem to be N-glycosylated.

Its subcellular location is the secreted. Functionally, precursor of the egg-yolk proteins that are sources of nutrients during embryonic development. The polypeptide is Vitellogenin-6 (vit-6) (Oscheius tipulae).